A 565-amino-acid chain; its full sequence is NAD-dependent malic enzyme (565 aa).

Tyr104 acts as the Proton donor in catalysis. NAD(+) is bound at residue Arg157. The active-site Proton acceptor is the Lys175. Residues Glu246, Asp247, and Asp270 each coordinate a divalent metal cation. Asp270 and Asn418 together coordinate NAD(+).

This sequence belongs to the malic enzymes family. As to quaternary structure, homotetramer. Mg(2+) serves as cofactor. The cofactor is Mn(2+).

It catalyses the reaction (S)-malate + NAD(+) = pyruvate + CO2 + NADH. It carries out the reaction oxaloacetate + H(+) = pyruvate + CO2. The polypeptide is NAD-dependent malic enzyme (Escherichia coli (strain SMS-3-5 / SECEC)).